The primary structure comprises 366 residues: D-alanine--D-alanine ligase (366 aa).

The region spanning 146–352 is the ATP-grasp domain; that stretch reads KICFEHAGLQ…YTELINRLIE (207 aa). 179–234 contacts ATP; that stretch reads EKKLRYPMFVKPANMGSSVGISKAHNRNELIEAIELALAYDRKFLIEKAINAREME. Asp-305, Glu-319, and Asn-321 together coordinate Mg(2+).

The protein belongs to the D-alanine--D-alanine ligase family. It depends on Mg(2+) as a cofactor. Mn(2+) is required as a cofactor.

It localises to the cytoplasm. It catalyses the reaction 2 D-alanine + ATP = D-alanyl-D-alanine + ADP + phosphate + H(+). The protein operates within cell wall biogenesis; peptidoglycan biosynthesis. In terms of biological role, cell wall formation. This Chloroherpeton thalassium (strain ATCC 35110 / GB-78) protein is D-alanine--D-alanine ligase.